The primary structure comprises 254 residues: HLA class II histocompatibility antigen, DR alpha chain (254 aa).

Residues Met1–Ala25 form the signal peptide. Positions Ile26–Asn109 are alpha-1. The Extracellular portion of the chain corresponds to Ile26–Glu216. Asn103 and Asn143 each carry an N-linked (GlcNAc...) asparagine glycan. An alpha-2 region spans residues Val110–Trp203. An Ig-like C1-type domain is found at Pro112–Glu204. Cys132 and Cys188 form a disulfide bridge. The segment at Glu204–Glu216 is connecting peptide. The helical transmembrane segment at Asn217 to Ile239 threads the bilayer. At Lys240–Leu254 the chain is on the cytoplasmic side. Lys244 participates in a covalent cross-link: Glycyl lysine isopeptide (Lys-Gly) (interchain with G-Cter in ubiquitin).

The protein belongs to the MHC class II family. Heterotrimer that consists of an alpha chain HLA-DRA, a beta chain HLA-DRB and a peptide (peptide-MHCII). Newly synthesized alpha and beta chains forms a heterodimer (MHCII) that associates with the CD74/invariant chain (Ii) in the endoplasmic reticulum (ER). Ii is a trimer composed of three subunits and each subunit interacts with one MHCII dimer, blocking the peptide-binding cleft. As a result, MHCII molecules cannot bind peptides present in the ER. The complex of MHCII and CD74/Ii is transported in vesicles from ER to Golgi to lysosomes, where it encounters antigenic peptides generated via proteolysis of endocytosed antigens. MHCII dimers are dissociated from CD74/Ii by the combined action of proteolysis and HLA-DM. Lysosomal enzymes such as cathepsin, degrade CD74/Ii leaving a 24 amino acid remnant called class II-associated Ii or CLIP. Interacts (via the peptide binding cleft) with CLIP; this interaction inhibits antigen peptide binding before entry in the endosomal compartment. The displacement of CLIP and replacement by a high affinity peptide in lysosomes is performed by HLA-DM heterodimer. HLA-DM catalyzes CLIP dissociation from MHCII, stabilizes empty MHCII and mediates the selection of high affinity peptides. Interacts with HLA-DM heterodimer; this interaction is direct. Interacts (via alpha-1 domain) with TCR (via CDRs). Interacts (via alpha-2 domain) with CD4 (via Ig-like V-type domain); this interaction increases the affinity of TCR for peptide-MHCII. As to quaternary structure, (Microbial infection) Interacts with Epstein-Barr virus BZLF2/gp42. In terms of assembly, (Microbial infection) Interacts with Staphylococcus aureus enterotoxin A/entA, enterotoxin B/entB, enterotoxin C1/entC1, enterotoxin D/entD, and enterotoxin H/entH. Ubiquitinated by MARCHF1 or MARCHF8 at Lys-244 leading to down-regulation of MHCII. When associated with ubiquitination of the beta chain at 'Lys-254', the down-regulation of MHCII may be highly effective. As to expression, expressed in professional APCs: macrophages, dendritic cells and B cells (at protein level). Expressed in thymic epithelial cells (at protein level).

Its subcellular location is the cell membrane. The protein resides in the endoplasmic reticulum membrane. The protein localises to the early endosome membrane. It localises to the late endosome membrane. It is found in the lysosome membrane. Its subcellular location is the autolysosome membrane. Functionally, an alpha chain of antigen-presenting major histocompatibility complex class II (MHCII) molecule. In complex with the beta chain HLA-DRB, displays antigenic peptides on professional antigen presenting cells (APCs) for recognition by alpha-beta T cell receptor (TCR) on HLA-DR-restricted CD4-positive T cells. This guides antigen-specific T-helper effector functions, both antibody-mediated immune response and macrophage activation, to ultimately eliminate the infectious agents and transformed cells. Typically presents extracellular peptide antigens of 10 to 30 amino acids that arise from proteolysis of endocytosed antigens in lysosomes. In the tumor microenvironment, presents antigenic peptides that are primarily generated in tumor-resident APCs likely via phagocytosis of apoptotic tumor cells or macropinocytosis of secreted tumor proteins. Presents peptides derived from intracellular proteins that are trapped in autolysosomes after macroautophagy, a mechanism especially relevant for T cell selection in the thymus and central immune tolerance. The selection of the immunodominant epitopes follows two processing modes: 'bind first, cut/trim later' for pathogen-derived antigenic peptides and 'cut first, bind later' for autoantigens/self-peptides. The anchor residue at position 1 of the peptide N-terminus, usually a large hydrophobic residue, is essential for high affinity interaction with MHCII molecules. This Homo sapiens (Human) protein is HLA class II histocompatibility antigen, DR alpha chain (HLA-DRA).